The primary structure comprises 140 residues: Putative nickel-responsive regulator 2 (140 aa).

Residues H81, H92, H94, and C100 each coordinate Ni(2+).

The protein belongs to the transcriptional regulatory CopG/NikR family. Ni(2+) is required as a cofactor.

Functionally, transcriptional regulator. The sequence is that of Putative nickel-responsive regulator 2 from Methanosarcina mazei (strain ATCC BAA-159 / DSM 3647 / Goe1 / Go1 / JCM 11833 / OCM 88) (Methanosarcina frisia).